The sequence spans 144 residues: Large ribosomal subunit protein uL15 (144 aa).

The segment at 1 to 48 (MIKLECLQDPSPRKRRTKLLGRGPSSGHGKTSGRGHKGDGSRSGYKRR) is disordered.

It belongs to the universal ribosomal protein uL15 family. In terms of assembly, part of the 50S ribosomal subunit.

Functionally, binds to the 23S rRNA. This Chlamydia trachomatis serovar L2 (strain ATCC VR-902B / DSM 19102 / 434/Bu) protein is Large ribosomal subunit protein uL15.